The sequence spans 720 residues: Putative glutamine--fructose-6-phosphate aminotransferase [isomerizing] (720 aa).

Cys2 functions as the Nucleophile; for GATase activity in the catalytic mechanism. In terms of domain architecture, Glutamine amidotransferase type-2 spans 2–321 (CGIFGYCNFL…DNDIAHIYDG (320 aa)). Residues 266–280 (STTSTFNHGSSTETP) are compositionally biased toward polar residues. The interval 266–285 (STTSTFNHGSSTETPAENGL) is disordered. SIS domains lie at 393–532 (WLTE…DLVS) and 565–710 (CDKK…VDLP).

It carries out the reaction D-fructose 6-phosphate + L-glutamine = D-glucosamine 6-phosphate + L-glutamate. The protein operates within nucleotide-sugar biosynthesis; UDP-N-acetyl-alpha-D-glucosamine biosynthesis; alpha-D-glucosamine 6-phosphate from D-fructose 6-phosphate: step 1/1. In terms of biological role, involved in amino sugar synthesis (formation of chitin, supplies the amino sugars of asparagine-linked oligosaccharides of glycoproteins). In Saccharomyces cerevisiae (strain RM11-1a) (Baker's yeast), this protein is Putative glutamine--fructose-6-phosphate aminotransferase [isomerizing].